A 155-amino-acid polypeptide reads, in one-letter code: Nuclear cap-binding protein subunit 2 (155 aa).

Residues Tyr-19, Tyr-42, 111–115 (RTDWD), 122–126 (RQYGR), and 132–133 (QV) contribute to the mRNA site. The region spanning 39–117 (ATLYVGNLSF…RIIRTDWDAG (79 aa)) is the RRM domain. Residues 121-155 (GRQYGRGKSGGQVRDEYRQDYDPARGGYGKMVQKS) are disordered. Over residues 133–143 (VRDEYRQDYDP) the composition is skewed to basic and acidic residues.

Belongs to the RRM NCBP2 family. In terms of assembly, component of the nuclear cap-binding complex (CBC), a heterodimer composed of ncbp1/cbp80 and ncbp2/cbp20 that interacts with m7GpppG-capped RNA.

The protein localises to the nucleus. The protein resides in the cytoplasm. Its function is as follows. Component of the cap-binding complex (CBC), which binds co-transcriptionally to the 5' cap of pre-mRNAs and is involved in various processes such as pre-mRNA splicing, translation regulation, nonsense-mediated mRNA decay, RNA-mediated gene silencing (RNAi) by microRNAs (miRNAs) and mRNA export. The CBC complex is involved in mRNA export from the nucleus, leading to the recruitment of the mRNA export machinery to the 5' end of mRNA and to mRNA export in a 5' to 3' direction through the nuclear pore. The CBC complex is also involved in mediating U snRNA and intronless mRNAs export from the nucleus. The CBC complex is essential for a pioneer round of mRNA translation, before steady state translation when the CBC complex is replaced by cytoplasmic cap-binding protein eIF4E. The pioneer round of mRNA translation mediated by the CBC complex plays a central role in nonsense-mediated mRNA decay (NMD), NMD only taking place in mRNAs bound to the CBC complex, but not on eIF4E-bound mRNAs. The CBC complex enhances NMD in mRNAs containing at least one exon-junction complex (EJC), promoting the interaction between upf1 and upf2. The CBC complex is also involved in 'failsafe' NMD, which is independent of the EJC complex, while it does not participate in Staufen-mediated mRNA decay (SMD). During cell proliferation, the CBC complex is also involved in microRNAs (miRNAs) biogenesis via its interaction with srrt/ars2, thereby being required for miRNA-mediated RNA interference. The CBC complex also acts as a negative regulator of parn, thereby acting as an inhibitor of mRNA deadenylation. In the CBC complex, ncbp2/cbp20 recognizes and binds capped RNAs (m7GpppG-capped RNA) but requires ncbp1/cbp80 to stabilize the movement of its N-terminal loop and lock the CBC into a high affinity cap-binding state with the cap structure. The conventional cap-binding complex with NCBP2 binds both small nuclear RNA (snRNA) and messenger (mRNA) and is involved in their export from the nucleus. The polypeptide is Nuclear cap-binding protein subunit 2 (ncbp2) (Danio rerio (Zebrafish)).